A 289-amino-acid chain; its full sequence is uncharacterized protein (289 aa).

Over residues 1–20 (MNPMDRQTEGQEPQHQDRQP) the composition is skewed to basic and acidic residues. The tract at residues 1–39 (MNPMDRQTEGQEPQHQDRQPGIESKMNPLPLSEDEDYRG) is disordered. 49 to 73 (IITGGDSGIGRAAAIAFAKEGADIS) is a binding site for NADP(+). Serine 181 is a substrate binding site. Residue tyrosine 194 is the Proton acceptor of the active site.

This sequence belongs to the short-chain dehydrogenases/reductases (SDR) family.

This is an uncharacterized protein from Bacillus subtilis (strain 168).